The chain runs to 260 residues: Indole-3-glycerol phosphate synthase (260 aa).

The protein belongs to the TrpC family.

The enzyme catalyses 1-(2-carboxyphenylamino)-1-deoxy-D-ribulose 5-phosphate + H(+) = (1S,2R)-1-C-(indol-3-yl)glycerol 3-phosphate + CO2 + H2O. The protein operates within amino-acid biosynthesis; L-tryptophan biosynthesis; L-tryptophan from chorismate: step 4/5. The chain is Indole-3-glycerol phosphate synthase from Staphylococcus saprophyticus subsp. saprophyticus (strain ATCC 15305 / DSM 20229 / NCIMB 8711 / NCTC 7292 / S-41).